Consider the following 700-residue polypeptide: Beta-galactosidase Bga (700 aa).

Arginine 103 lines the substrate pocket. Cysteine 107 provides a ligand contact to Zn(2+). Asparagine 141 contributes to the substrate binding site. Glutamate 142 (proton donor) is an active-site residue. Residues cysteine 151, cysteine 153, and cysteine 156 each contribute to the Zn(2+) site. Residue glutamate 312 is the Nucleophile of the active site. Substrate is bound by residues tryptophan 320 and 360-363; that span reads EQYH. Acidic residues predominate over residues 648–658; the sequence is DPESLAVDDTD. The segment at 648-674 is disordered; the sequence is DPESLAVDDTDRDGFDPMADDDKDSSA.

It belongs to the glycosyl hydrolase 42 family.

The enzyme catalyses Hydrolysis of terminal non-reducing beta-D-galactose residues in beta-D-galactosides.. With respect to regulation, requires 4 M NaCl or KCl for maximal activity. In terms of biological role, cleaves o-nitrophenyl-beta-D-galactopyranoside (ONPG) in vitro. The chain is Beta-galactosidase Bga from Halorubrum lacusprofundi (strain ATCC 49239 / DSM 5036 / JCM 8891 / ACAM 34).